The chain runs to 31 residues: Cytochrome b6-f complex subunit 6 (31 aa).

A helical membrane pass occupies residues 4–24; sequence ITSYFGFLLAALTITSALLIG.

The protein belongs to the PetL family. As to quaternary structure, the 4 large subunits of the cytochrome b6-f complex are cytochrome b6, subunit IV (17 kDa polypeptide, PetD), cytochrome f and the Rieske protein, while the 4 small subunits are PetG, PetL, PetM and PetN. The complex functions as a dimer.

Its subcellular location is the plastid. The protein resides in the chloroplast thylakoid membrane. Its function is as follows. Component of the cytochrome b6-f complex, which mediates electron transfer between photosystem II (PSII) and photosystem I (PSI), cyclic electron flow around PSI, and state transitions. PetL is important for photoautotrophic growth as well as for electron transfer efficiency and stability of the cytochrome b6-f complex. This is Cytochrome b6-f complex subunit 6 from Magnolia grandiflora (Southern magnolia).